Reading from the N-terminus, the 239-residue chain is Purine nucleoside phosphorylase DeoD-type 1 (239 aa).

An a purine D-ribonucleoside-binding site is contributed by His-5. Residues Gly-21, Arg-25, Arg-44, and 88-91 each bind phosphate; that span reads RVGS. A purine D-ribonucleoside-binding positions include 180-182 and 204-205; these read EME and SD. Asp-205 acts as the Proton donor in catalysis.

Belongs to the PNP/UDP phosphorylase family. In terms of assembly, homohexamer; trimer of homodimers.

It catalyses the reaction a purine D-ribonucleoside + phosphate = a purine nucleobase + alpha-D-ribose 1-phosphate. The enzyme catalyses a purine 2'-deoxy-D-ribonucleoside + phosphate = a purine nucleobase + 2-deoxy-alpha-D-ribose 1-phosphate. Catalyzes the reversible phosphorolytic breakdown of the N-glycosidic bond in the beta-(deoxy)ribonucleoside molecules, with the formation of the corresponding free purine bases and pentose-1-phosphate. This chain is Purine nucleoside phosphorylase DeoD-type 1, found in Vibrio vulnificus (strain CMCP6).